The following is a 134-amino-acid chain: Calcitonin gene-related peptide 2 (134 aa).

The first 26 residues, 1-26 (MDFWKFFPFLALSSMWVLCLASSLQA), serve as a signal peptide directing secretion. A propeptide spanning residues 27–86 (APFRSALESSLDLGTLSDQEKHLLLAALIQDYEQKARKLEQEEQETEGSRKGSSSSVISQ) is cleaved from the precursor. The disordered stretch occupies residues 65 to 91 (LEQEEQETEGSRKGSSSSVISQKRSCN). Residues 77 to 89 (KGSSSSVISQKRS) show a composition bias toward low complexity. Cys-90 and Cys-95 are joined by a disulfide. The residue at position 125 (Phe-125) is a Phenylalanine amide. A propeptide spanning residues 131-134 (DLRV) is cleaved from the precursor.

The protein belongs to the calcitonin family.

Its subcellular location is the secreted. CALCB/CGRP2 is a peptide hormone that induces vasodilation mediated by the CALCRL-RAMP1 receptor complex. Dilates a variety of vessels including the coronary, cerebral and systemic vasculature. Its abundance in the CNS also points toward a neurotransmitter or neuromodulator role. This chain is Calcitonin gene-related peptide 2, found in Rattus norvegicus (Rat).